Reading from the N-terminus, the 792-residue chain is uncharacterized protein (792 aa).

Position 361–362 (361–362 (WD)) interacts with substrate. Glutamate 488 acts as the Proton donor in catalysis. A substrate-binding site is contributed by 590–591 (KQ). A disordered region spans residues 753-792 (DSPSTIAVRDRKPLLPPPSQPPGREPVSRRHKSLIISAAR). The span at 766–776 (LLPPPSQPPGR) shows a compositional bias: pro residues.

Belongs to the glycosyl hydrolase 65 family.

This is an uncharacterized protein from Mycobacterium leprae (strain TN).